A 379-amino-acid chain; its full sequence is MSRSALRRVKRLVVKVGTGTLTDRAGRFDRDNCARLASELAEVSRGRKVVLVSSGAVALGAERLGLARSRGKPWDLPTKQACAAAGQPHLMAAWGEALGRHGLVTAQVLLTADDLASRKRFLNARRTFERLLDAGAVPVVNENDTVAVDELKVGDNDTLAALVAGCVEADAVAMLTDVDGLYDRNPAEPGARLLRDVPRVTAEIERSAGGAGSERSVGGMITKVKAARRLGAQGVVTALLSGRRARALPALLAGEPVGTVFAPGAHRLSSRQGWLAAAARGKGVILVDAGARRALVEQGRSLLPSGVRGVQGQFGVGDPVDVAVDPARPFARGLAGYAADEVRRIAGLKTGEIERALGYKYLDEIVHRNDLVVLETGRE.

ATP is bound at residue Lys15. Residues Ser54, Asp144, and Asn156 each coordinate substrate. 176 to 177 (TD) contributes to the ATP binding site. The PUA domain maps to 282–360 (KGVILVDAGA…GEIERALGYK (79 aa)).

The protein belongs to the glutamate 5-kinase family.

The protein localises to the cytoplasm. It carries out the reaction L-glutamate + ATP = L-glutamyl 5-phosphate + ADP. It functions in the pathway amino-acid biosynthesis; L-proline biosynthesis; L-glutamate 5-semialdehyde from L-glutamate: step 1/2. In terms of biological role, catalyzes the transfer of a phosphate group to glutamate to form L-glutamate 5-phosphate. The protein is Glutamate 5-kinase of Anaeromyxobacter dehalogenans (strain 2CP-C).